The chain runs to 550 residues: Invertase (550 aa).

The first 22 residues, 1-22 (MIQLSPLLLLPLFSVFNSIADA), serve as a signal peptide directing secretion. Residues 39–42 (WMND), Q60, and 103–104 (FS) each bind substrate. D42 is an active-site residue. Residues N112, N113, N119, and N165 are each glycosylated (N-linked (GlcNAc...) asparagine). A substrate-binding site is contributed by 170 to 171 (RD). N211 is a glycosylation site (N-linked (GlcNAc...) asparagine). Residue E223 coordinates substrate. N237 is a glycosylation site (N-linked (GlcNAc...) asparagine). W313 contributes to the substrate binding site. 4 N-linked (GlcNAc...) asparagine glycosylation sites follow: N333, N364, N398, and N420.

This sequence belongs to the glycosyl hydrolase 32 family.

It catalyses the reaction Hydrolysis of terminal non-reducing beta-D-fructofuranoside residues in beta-D-fructofuranosides.. The protein is Invertase (INV1) of Wickerhamomyces anomalus (Yeast).